The chain runs to 278 residues: Indole-3-glycerol phosphate synthase (278 aa).

The protein belongs to the TrpC family.

The catalysed reaction is 1-(2-carboxyphenylamino)-1-deoxy-D-ribulose 5-phosphate + H(+) = (1S,2R)-1-C-(indol-3-yl)glycerol 3-phosphate + CO2 + H2O. Its pathway is amino-acid biosynthesis; L-tryptophan biosynthesis; L-tryptophan from chorismate: step 4/5. This is Indole-3-glycerol phosphate synthase from Pseudomonas fluorescens (strain SBW25).